A 1085-amino-acid chain; its full sequence is Error-prone DNA polymerase 2 (1085 aa).

The segment at 1040–1066 (AGRGDEFAHGGGGPDSRDRQKPVVPRD) is disordered.

Belongs to the DNA polymerase type-C family. DnaE2 subfamily.

It is found in the cytoplasm. The enzyme catalyses DNA(n) + a 2'-deoxyribonucleoside 5'-triphosphate = DNA(n+1) + diphosphate. Functionally, DNA polymerase involved in damage-induced mutagenesis and translesion synthesis (TLS). It is not the major replicative DNA polymerase. In Agrobacterium fabrum (strain C58 / ATCC 33970) (Agrobacterium tumefaciens (strain C58)), this protein is Error-prone DNA polymerase 2.